Here is a 462-residue protein sequence, read N- to C-terminus: Notoamide biosynthesis cluster protein O' (462 aa).

3 helical membrane-spanning segments follow: residues 16–36 (IFNVSVVAVCAFIAPGLWAAM), 55–75 (AVIFCLQVVVCVFGSSLIAKI), and 79–99 (WAFALGMVGFPIYASSVYCNV). The N-linked (GlcNAc...) asparagine glycan is linked to asparagine 102. Transmembrane regions (helical) follow at residues 104-124 (SWYIMLACVIDGICSGIFWLT), 143-163 (AYWLASRIMGQMIGGAVTLGV), 173-193 (ISVQTYLVFISIQAIGPFVAA), and 233-253 (ILLLLPMMFQSVFSEAFFSTY). The N-linked (GlcNAc...) asparagine glycan is linked to asparagine 254. 4 helical membrane passes run 265 to 285 (LSSLVASTCVIISNFLLGFFL), 297 to 317 (MAAFIIIYAFELSLYVYAMVV), 343 to 363 (VYILMLVGFNLMYDYLYWLIG), and 404 to 424 (AVAVNLSFFAACIVPSAFVIY). A disordered region spans residues 443–462 (LQTSGEGSHDIMDANGKSDD). The span at 449 to 462 (GSHDIMDANGKSDD) shows a compositional bias: basic and acidic residues.

The protein belongs to the unc-93 family.

The protein resides in the membrane. Functionally, part of the gene cluster that mediates the biosynthesis of notoamide, a fungal indole alkaloid that belongs to a family of natural products containing a characteristic bicyclo[2.2.2]diazaoctane core. The first step of notoamide biosynthesis involves coupling of L-proline and L-tryptophan by the bimodular NRPS notE', to produce cyclo-L-tryptophan-L-proline called brevianamide F. The reverse prenyltransferase notF' then acts as a deoxybrevianamide E synthase and converts brevianamide F to deoxybrevianamide E via reverse prenylation at C-2 of the indole ring leading to the bicyclo[2.2.2]diazaoctane core. Deoxybrevianamide E is further hydroxylated at C-6 of the indole ring, likely catalyzed by the cytochrome P450 monooxygenase notG', to yield 6-hydroxy-deoxybrevianamide E. 6-hydroxy-deoxybrevianamide E is a specific substrate of the prenyltransferase notC' for normal prenylation at C-7 to produce 6-hydroxy-7-prenyl-deoxybrevianamide, also called notoamide S. As the proposed pivotal branching point in notoamide biosynthesis, notoamide S can be diverted to notoamide E through an oxidative pyran ring closure putatively catalyzed by either notH' cytochrome P450 monooxygenase or the notD' FAD-linked oxidoreductase. This step would be followed by an indole 2,3-epoxidation-initiated pinacol-like rearrangement catalyzed by the notB' FAD-dependent monooxygenase leading to the formation of notoamide C and notoamide D. On the other hand notoamide S is converted to notoamide T by notH' (or notD'), a bifunctional oxidase that also functions as the intramolecular Diels-Alderase responsible for generation of (-)-notoamide T. To generate antipodal (+)-notoaminide T, notH (or notD) in Aspergillus strain MF297-2 is expected to catalyze a Diels-Alder reaction leading to the opposite stereochemistry. The remaining oxidoreductase notD' (or notH') likely catalyzes the oxidative pyran ring formation to yield (-)-stephacidin A. The FAD-dependent monooxygenase notI' is highly similar to notB' and is predicted to catalyze a similar conversion from (-)-stephacidin A to (+)-notoamide B via the 2,3-epoxidation of (-)-stephacidin A followed by a pinacol-type rearrangement. Finally, it remains unclear which enzyme could be responsible for the final hydroxylation steps leading to notoamide A and sclerotiamide. The function of notO' in the notoamide biosynthesis has not been determined yet. This chain is Notoamide biosynthesis cluster protein O', found in Aspergillus versicolor.